The chain runs to 162 residues: UPF0260 protein CC_3276 (162 aa).

The protein belongs to the UPF0260 family.

The chain is UPF0260 protein CC_3276 from Caulobacter vibrioides (strain ATCC 19089 / CIP 103742 / CB 15) (Caulobacter crescentus).